Here is an 81-residue protein sequence, read N- to C-terminus: Sec-independent protein translocase protein TatA (81 aa).

Residues 1–21 (MGSLSLWHWIIVGAVLLLLFG) traverse the membrane as a helical segment. A disordered region spans residues 41–81 (KKGLSEDDEKPEAARPAEPARSLDHQPVAEQPKVSETHRIG).

It belongs to the TatA/E family. In terms of assembly, the Tat system comprises two distinct complexes: a TatABC complex, containing multiple copies of TatA, TatB and TatC subunits, and a separate TatA complex, containing only TatA subunits. Substrates initially bind to the TatABC complex, which probably triggers association of the separate TatA complex to form the active translocon.

It localises to the cell inner membrane. Functionally, part of the twin-arginine translocation (Tat) system that transports large folded proteins containing a characteristic twin-arginine motif in their signal peptide across membranes. TatA could form the protein-conducting channel of the Tat system. This chain is Sec-independent protein translocase protein TatA, found in Beijerinckia indica subsp. indica (strain ATCC 9039 / DSM 1715 / NCIMB 8712).